A 1375-amino-acid chain; its full sequence is DNA-directed RNA polymerase subunit beta (1375 aa).

Belongs to the RNA polymerase beta chain family. The RNAP catalytic core consists of 2 alpha, 1 beta, 1 beta' and 1 omega subunit. When a sigma factor is associated with the core the holoenzyme is formed, which can initiate transcription.

The enzyme catalyses RNA(n) + a ribonucleoside 5'-triphosphate = RNA(n+1) + diphosphate. Its function is as follows. DNA-dependent RNA polymerase catalyzes the transcription of DNA into RNA using the four ribonucleoside triphosphates as substrates. In Methylorubrum populi (strain ATCC BAA-705 / NCIMB 13946 / BJ001) (Methylobacterium populi), this protein is DNA-directed RNA polymerase subunit beta.